A 241-amino-acid polypeptide reads, in one-letter code: Glucosamine-6-phosphate deaminase (241 aa).

Aspartate 67 (proton acceptor; for enolization step) is an active-site residue. Asparagine 136 functions as the For ring-opening step in the catalytic mechanism. Histidine 138 acts as the Proton acceptor; for ring-opening step in catalysis. Glutamate 143 serves as the catalytic For ring-opening step.

This sequence belongs to the glucosamine/galactosamine-6-phosphate isomerase family. NagB subfamily.

It carries out the reaction alpha-D-glucosamine 6-phosphate + H2O = beta-D-fructose 6-phosphate + NH4(+). It participates in amino-sugar metabolism; N-acetylneuraminate degradation; D-fructose 6-phosphate from N-acetylneuraminate: step 5/5. Catalyzes the reversible isomerization-deamination of glucosamine 6-phosphate (GlcN6P) to form fructose 6-phosphate (Fru6P) and ammonium ion. This is Glucosamine-6-phosphate deaminase from Clostridium tetani (strain Massachusetts / E88).